Consider the following 591-residue polypeptide: Transcription factor COE1 (591 aa).

N-acetylmethionine is present on Met-1. The span at 1-14 (MFGIQESIQRSGSS) shows a compositional bias: polar residues. The interval 1 to 21 (MFGIQESIQRSGSSMKEEPLG) is disordered. Residue Lys-16 forms a Glycyl lysine isopeptide (Lys-Gly) (interchain with G-Cter in SUMO1); alternate linkage. Lys-16 is covalently cross-linked (Glycyl lysine isopeptide (Lys-Gly) (interchain with G-Cter in SUMO2); alternate). Residues 63-66 (RKSN) are interaction with DNA. A C5-type zinc finger spans residues 151–170 (CRVLLTHEIMCSRCCDKKSC). 2 interaction with DNA regions span residues 197–204 (NCLKNAGN) and 236–239 (NNSK). One can recognise an IPT/TIG domain in the interval 262–345 (PCIKAISPSE…KGTPGRFIYT (84 aa)). A disordered region spans residues 457–480 (GFTRNSSSVSPHGYVPSTTPQQTN).

It belongs to the COE family. As to quaternary structure, homodimer. Interacts with ZNF423 and ZNF521, leading to prevent EBF1 to bind DNA and activate target genes. Interacts with CCR4-NOT component CNOT3. (Microbial infection) Interacts with Epstein-barr virus protein EBNA2.

It is found in the nucleus. Its function is as follows. Key pioneer transcription factor of B-cell specification and commitment. Recognizes variations of the palindromic sequence 5'-ATTCCCNNGGGAATT-3'. Operates in a transcription factor network to activate B-cell-specific genes and repress genes associated with alternative cell fates. For instance, positively regulates many B-cell specific genes including BCR or CD40 while repressing genes that direct cells into alternative lineages, including GATA3 and TCF7 for the T-cell lineage. In addition to its role during lymphopoiesis, controls the thermogenic gene program in adipocytes during development and in response to environmental cold. Functionally, (Microbial infection) Acts as a chromatin anchor for Epstein-Barr virus EBNA2 to mediate the assembly of EBNA2 chromatin complexes in B-cells. In addition, binds to the viral LMP1 proximal promoter and promotes its expression during latency. The sequence is that of Transcription factor COE1 (EBF1) from Homo sapiens (Human).